A 742-amino-acid chain; its full sequence is Ferric enterobactin receptor PirA (742 aa).

The first 28 residues, 1–28, serve as a signal peptide directing secretion; sequence MYPQFRRGHLAAAVLFASSSLLGGQALA. The TBDR plug domain occupies 57-184; that stretch reads QELKQAPGVS…AGGVVNIITK (128 aa). 2 disordered regions span residues 91 to 112 and 409 to 435; these read GVNL…IDIR and SSLK…PKSK. Polar residues predominate over residues 94-108; the sequence is LTGNSSSGQRGNNRQ. The TBDR beta-barrel domain occupies 189 to 742; it reads RLRGSMTVFT…AYYVSMTTSF (554 aa). Cysteines 516 and 525 form a disulfide. The TonB C-terminal box signature appears at 725 to 742; that stretch reads ATYNEPGRAYYVSMTTSF.

The protein belongs to the TonB-dependent receptor family.

It localises to the cell outer membrane. Functionally, specific receptor for the siderophore ferric enterobactin. Probably involved in the transport of siderophores, including host catecholamines such as L-DOPA. The sequence is that of Ferric enterobactin receptor PirA from Pseudomonas aeruginosa (strain ATCC 15692 / DSM 22644 / CIP 104116 / JCM 14847 / LMG 12228 / 1C / PRS 101 / PAO1).